The following is a 629-amino-acid chain: MLLSELSHPNELHGLTVSQLEEIACQIRERHLQVVSTSGGHLGPGLGVVELTLALYQTLDLDSDRVVWDVGHQGYPHKLITGRFSQFDSLRQQNGVAGYLKRSESKFDHFGAGHASTSISAALGMAIARDRKGENHKCVAVIGDGALTGGMALEAINHAGHLPNTPLVVVLNDNDMSISPPVGALSSYLNKVRLSPPLQFLSDSVQESVKNIPLIGKDIPEELKNIKGSVRRLAVPKVGAVFEELGFTYMGPIDGHDIENLINTFNAAHRLKKPVLVHIVTTKGKGYPYAEADQVGYHAQSAFDLTTGKSIPSKKPKPVSYSKIFGQTLLKICEQDSKVIGITAAMATGTGLDILQKNIPEQYVDVGIAEQHAVTLAAGMSCDGLKPVVAIYSTFLQRAFDQLIHDVGIQNLPVSFVLDRAGIVGADGPTHQGQYDISYMRSIPNFVLMAPKDESELQRMLITSINHKGPTALRIPRGSGLGVAVMDEGWEPLNIGEAEILEEGNDILIIAYGSMVASAIETAEILKGMNINTCIVNARFVKPLDKNLIIPLASRIQKVVTMEEGTLIGGFGSAIVELFNDNEVNIPVYRIGIPDVLVDHASPDQSKEKLGLMPDQMADKIIQKFKLNN.

Thiamine diphosphate-binding positions include His72 and 113–115 (GHA). Asp144 is a Mg(2+) binding site. Thiamine diphosphate is bound by residues 145–146 (GA), Asn174, Tyr287, and Glu370. Asn174 lines the Mg(2+) pocket.

It belongs to the transketolase family. DXPS subfamily. In terms of assembly, homodimer. Mg(2+) serves as cofactor. It depends on thiamine diphosphate as a cofactor.

The enzyme catalyses D-glyceraldehyde 3-phosphate + pyruvate + H(+) = 1-deoxy-D-xylulose 5-phosphate + CO2. The protein operates within metabolic intermediate biosynthesis; 1-deoxy-D-xylulose 5-phosphate biosynthesis; 1-deoxy-D-xylulose 5-phosphate from D-glyceraldehyde 3-phosphate and pyruvate: step 1/1. Catalyzes the acyloin condensation reaction between C atoms 2 and 3 of pyruvate and glyceraldehyde 3-phosphate to yield 1-deoxy-D-xylulose-5-phosphate (DXP). In Prochlorococcus marinus (strain MIT 9312), this protein is 1-deoxy-D-xylulose-5-phosphate synthase.